Here is a 243-residue protein sequence, read N- to C-terminus: tRNA (guanine-N(1)-)-methyltransferase (243 aa).

S-adenosyl-L-methionine is bound by residues Gly-113 and Ile-133–Leu-138.

The protein belongs to the RNA methyltransferase TrmD family. Homodimer.

It localises to the cytoplasm. It catalyses the reaction guanosine(37) in tRNA + S-adenosyl-L-methionine = N(1)-methylguanosine(37) in tRNA + S-adenosyl-L-homocysteine + H(+). Functionally, specifically methylates guanosine-37 in various tRNAs. In Bacillus velezensis (strain DSM 23117 / BGSC 10A6 / LMG 26770 / FZB42) (Bacillus amyloliquefaciens subsp. plantarum), this protein is tRNA (guanine-N(1)-)-methyltransferase.